The primary structure comprises 236 residues: Orotidine 5'-phosphate decarboxylase (236 aa).

Substrate is bound by residues D13, K35, 62-71, T123, R184, Q193, G213, and R214; that span reads DLKFYDIPQT. Catalysis depends on K64, which acts as the Proton donor.

The protein belongs to the OMP decarboxylase family. Type 1 subfamily. As to quaternary structure, homodimer.

The catalysed reaction is orotidine 5'-phosphate + H(+) = UMP + CO2. It participates in pyrimidine metabolism; UMP biosynthesis via de novo pathway; UMP from orotate: step 2/2. Its function is as follows. Catalyzes the decarboxylation of orotidine 5'-monophosphate (OMP) to uridine 5'-monophosphate (UMP). The polypeptide is Orotidine 5'-phosphate decarboxylase (Coxiella burnetii (strain CbuK_Q154) (Coxiella burnetii (strain Q154))).